The sequence spans 146 residues: Hemoglobin subunit beta-2 (146 aa).

The Globin domain maps to 2–146 (EWTDFERATI…VVSALGRQYH (145 aa)). The heme b site is built by H63 and H92.

This sequence belongs to the globin family. Hb3 is a heterotetramer of two alpha-2 chains and two beta-2 chains. Red blood cells.

Involved in oxygen transport from gills to the various peripheral tissues. This chain is Hemoglobin subunit beta-2 (hbb2), found in Anarhichas minor (Arctic spotted wolffish).